A 507-amino-acid chain; its full sequence is MEEFKRYLELHRFQQHDFIYPLIFQEYIYALAHGRGLNGSIFFENAGYDNKSSLLIVKRLITHLITQMYQQNHFLFYTNDFNPNKFLGCNTNLYSQMIFEGFAVVVEIPFYLRLLSFLEGKERVKSHNLRSLHSIFPFLEDKFSHLNSLLDILIPHPVHLEILVQTLRYWVKDPSSLHLLRFFLHEYPNWNSLMTPKKSSFSFSKRNQRFFFFLYNFYVCEYESIFVFLRNQSSHLCSTSSETLSERICFYKKIELEEVFTKDFKAILWVFKDPFLHYVRYRGKSILASKDSSLLMNKWKYYLVNIWECYFYIWSQPRRIHINQLSNNSLDFLGYLLSVRLKPSMVRSQMIENSFLIENAIKQFDIIVPITPLVTSLSKAKFCNVLGHPYSKPSWAESSDSDIIERFGRIYRNLSHYHSGSLKKISLYRIKYILRLSCARTLARKHKSTVRSFLKRLGVGLLEEFFTEEEQVFYLTFPRASSTSGKLYQRRIWYLDIFCINDPANHE.

The protein belongs to the intron maturase 2 family. MatK subfamily.

It localises to the plastid. The protein localises to the chloroplast. Its function is as follows. Usually encoded in the trnK tRNA gene intron. Probably assists in splicing its own and other chloroplast group II introns. The chain is Maturase K from Lyonia ferruginea (Rusty staggerbush).